The sequence spans 125 residues: Small ribosomal subunit protein bS6m (125 aa).

This sequence belongs to the bacterial ribosomal protein bS6 family. In terms of assembly, component of the mitochondrial small ribosomal subunit (mt-SSU). Mature mammalian 55S mitochondrial ribosomes consist of a small (28S) and a large (39S) subunit. The 28S small subunit contains a 12S ribosomal RNA (12S mt-rRNA) and 30 different proteins. The 39S large subunit contains a 16S rRNA (16S mt-rRNA), a copy of mitochondrial valine transfer RNA (mt-tRNA(Val)), which plays an integral structural role, and 52 different proteins.

The protein localises to the mitochondrion. This Homo sapiens (Human) protein is Small ribosomal subunit protein bS6m (MRPS6).